Consider the following 95-residue polypeptide: MIWLAVYDIEDDGERAKASAILQAWGFVRVQRSFYVGRMPRGKAADLLKILQRHVKSGHIALIPITDELLAKALELGRPPYAPLKPPKYAQIYVV.

Asp8 contacts Mg(2+).

It belongs to the CRISPR-associated endoribonuclease Cas2 protein family. As to quaternary structure, homodimer, forms a heterotetramer with a Cas1 homodimer. Requires Mg(2+) as cofactor.

In terms of biological role, CRISPR (clustered regularly interspaced short palindromic repeat), is an adaptive immune system that provides protection against mobile genetic elements (viruses, transposable elements and conjugative plasmids). CRISPR clusters contain sequences complementary to antecedent mobile elements and target invading nucleic acids. CRISPR clusters are transcribed and processed into CRISPR RNA (crRNA). Functions as a ssRNA-specific endoribonuclease. Involved in the integration of spacer DNA into the CRISPR cassette. The polypeptide is CRISPR-associated endoribonuclease Cas2 1 (Pyrobaculum aerophilum (strain ATCC 51768 / DSM 7523 / JCM 9630 / CIP 104966 / NBRC 100827 / IM2)).